A 301-amino-acid polypeptide reads, in one-letter code: Rhodopsin (301 aa).

Residues 1-18 (LHMIHLHWYQYPPMNPMM) lie on the Extracellular side of the membrane. The helical transmembrane segment at 19–43 (YPLLLIFMFITGIPCLAGNFVTIWV) threads the bilayer. Over 44-55 (FMTTKSLRSPAN) the chain is Cytoplasmic. Residues 56–78 (LLVVNLAMSDFLMMFTMFPPMMI) traverse the membrane as a helical segment. The Extracellular segment spans residues 79–92 (TCYYHTWTLGPTFC). Residues Cys92 and Cys169 are joined by a disulfide bond. The chain crosses the membrane as a helical span at residues 93-115 (QVYAFLGNLFGCTSIWTMVFITF). Positions 116-118 (DRY) match the 'Ionic lock' involved in activated form stabilization motif. Residues 116 to 134 (DRYNVIVKGVAGEPLSNKK) are Cytoplasmic-facing. The helical transmembrane segment at 135 to 155 (AALWILSAWVLSFSWCSAPFF) threads the bilayer. Residues 156 to 182 (GWNRYVPEGNLTGCGTDYLSEDALSRS) lie on the Extracellular side of the membrane. Asn165 carries an N-linked (GlcNAc...) asparagine glycan. A helical transmembrane segment spans residues 183–204 (YLYVYSVWVYFLPLLITIYCYV). Residues 205-245 (FIIKAVAAHEKGMRDQAKKMGIKSLRNEEAQKTSAECRLAK) lie on the Cytoplasmic side of the membrane. Residues 246–267 (IAMTTVALWFIAWTPYLLINWV) form a helical membrane-spanning segment. Topologically, residues 268–278 (GMFARSYLSPV) are extracellular. The helical transmembrane segment at 279-300 (YTIWGYVFAKANAVYNPIVYAI) threads the bilayer. N6-(retinylidene)lysine is present on Lys288.

Belongs to the G-protein coupled receptor 1 family. Opsin subfamily. As to quaternary structure, homodimer. Interacts with GNAQ. Post-translationally, contains one covalently linked retinal chromophore.

It localises to the cell projection. Its subcellular location is the rhabdomere membrane. Photoreceptor required for image-forming vision at low light intensity. Can use both retinal and 3-dehydroretinal as visual pigment. Light-induced isomerization of 11-cis to all-trans retinal triggers a conformational change that activates signaling via G-proteins. Signaling via GNAQ probably mediates the activation of phospholipase C. In Cambarellus shufeldtii (Cajun dwarf crayfish), this protein is Rhodopsin (RHO).